The primary structure comprises 121 residues: Small ribosomal subunit protein uS13 (121 aa).

Residues 94–121 are disordered; that stretch reads GLPVRGQSSKTNARTVKGPRKTVANKKK. Positions 110 to 121 are enriched in basic residues; sequence KGPRKTVANKKK.

It belongs to the universal ribosomal protein uS13 family. Part of the 30S ribosomal subunit. Forms a loose heterodimer with protein S19. Forms two bridges to the 50S subunit in the 70S ribosome.

In terms of biological role, located at the top of the head of the 30S subunit, it contacts several helices of the 16S rRNA. In the 70S ribosome it contacts the 23S rRNA (bridge B1a) and protein L5 of the 50S subunit (bridge B1b), connecting the 2 subunits; these bridges are implicated in subunit movement. Contacts the tRNAs in the A and P-sites. This is Small ribosomal subunit protein uS13 from Mesoplasma florum (strain ATCC 33453 / NBRC 100688 / NCTC 11704 / L1) (Acholeplasma florum).